A 374-amino-acid polypeptide reads, in one-letter code: Alcohol dehydrogenase class-3 (374 aa).

Ala-2 carries the post-translational modification N-acetylalanine. Positions 45, 67, 97, 100, 103, 111, and 174 each coordinate Zn(2+). Lys-233 bears the N6-succinyllysine mark. Ser-247 is subject to Phosphoserine. Position 315 is an N6-succinyllysine (Lys-315). Ser-324 carries the post-translational modification Phosphoserine.

Belongs to the zinc-containing alcohol dehydrogenase family. Class-III subfamily. Homodimer. Zn(2+) serves as cofactor.

The protein localises to the cytoplasm. It catalyses the reaction a primary alcohol + NAD(+) = an aldehyde + NADH + H(+). It carries out the reaction a secondary alcohol + NAD(+) = a ketone + NADH + H(+). The catalysed reaction is S-(hydroxymethyl)glutathione + NADP(+) = S-formylglutathione + NADPH + H(+). The enzyme catalyses S-(hydroxymethyl)glutathione + NAD(+) = S-formylglutathione + NADH + H(+). It catalyses the reaction 20-oxo-(5Z,8Z,11Z,14Z)-eicosatetraenoate + NAD(+) + H2O = (5Z,8Z,11Z,14Z)-eicosatetraenedioate + NADH + 2 H(+). It carries out the reaction 20-hydroxy-(5Z,8Z,11Z,14Z)-eicosatetraenoate + NAD(+) = 20-oxo-(5Z,8Z,11Z,14Z)-eicosatetraenoate + NADH + H(+). The catalysed reaction is S-nitrosoglutathione + NADH + H(+) = S-(hydroxysulfenamide)glutathione + NAD(+). In terms of biological role, catalyzes the oxidation of long-chain primary alcohols and the oxidation of S-(hydroxymethyl) glutathione. Also oxidizes long chain omega-hydroxy fatty acids, such as 20-HETE, producing both the intermediate aldehyde, 20-oxoarachidonate and the end product, a dicarboxylic acid, (5Z,8Z,11Z,14Z)-eicosatetraenedioate. Class-III ADH is remarkably ineffective in oxidizing ethanol. Required for clearance of cellular formaldehyde, a cytotoxic and carcinogenic metabolite that induces DNA damage. Also acts as a S-nitroso-glutathione reductase by catalyzing the NADH-dependent reduction of S-nitrosoglutathione, thereby regulating protein S-nitrosylation. The protein is Alcohol dehydrogenase class-3 of Bos taurus (Bovine).